Consider the following 149-residue polypeptide: Aquaporin-like protein 2 (149 aa).

The segment at 1–35 (MSNESNDLEKNISHLDPTGVDNAYIPPEQPETKHS) is disordered. Over 1–47 (MSNESNDLEKNISHLDPTGVDNAYIPPEQPETKHSRFNIDRGTLRNH) the chain is Cytoplasmic. Residues 48 to 68 (FIAAVGEFCGTFMFLWCAYVI) traverse the membrane as a helical segment. Over 69-89 (CNVANHDVALTTEPEGSHPGQ) the chain is Extracellular. A helical transmembrane segment spans residues 90–110 (LIMIALGFGFSVMFSIWCFWW). Residues 111 to 149 (GFEPSRFSLFVFGQSHLTSQMCSDVVSSDHCWDGCWWCR) lie on the Cytoplasmic side of the membrane.

The protein belongs to the MIP/aquaporin (TC 1.A.8) family.

The protein localises to the endoplasmic reticulum membrane. It is found in the cell membrane. Its function is as follows. Water channel required to facilitate the transport of water across membranes. Involved in freeze tolerance, osmotolerance and cell flocculation in liquid cultures. Is non-functional in most laboratory strains. In Saccharomyces cerevisiae (strain Lalvin EC1118 / Prise de mousse) (Baker's yeast), this protein is Aquaporin-like protein 2 (AQY2-2).